A 377-amino-acid chain; its full sequence is Succinyl-diaminopimelate desuccinylase (377 aa).

A Zn(2+)-binding site is contributed by histidine 68. Aspartate 70 is an active-site residue. Aspartate 101 contacts Zn(2+). Glutamate 135 serves as the catalytic Proton acceptor. Zn(2+) contacts are provided by glutamate 136, glutamate 164, and histidine 350.

The protein belongs to the peptidase M20A family. DapE subfamily. As to quaternary structure, homodimer. It depends on Zn(2+) as a cofactor. The cofactor is Co(2+).

The catalysed reaction is N-succinyl-(2S,6S)-2,6-diaminopimelate + H2O = (2S,6S)-2,6-diaminopimelate + succinate. The protein operates within amino-acid biosynthesis; L-lysine biosynthesis via DAP pathway; LL-2,6-diaminopimelate from (S)-tetrahydrodipicolinate (succinylase route): step 3/3. Its function is as follows. Catalyzes the hydrolysis of N-succinyl-L,L-diaminopimelic acid (SDAP), forming succinate and LL-2,6-diaminopimelate (DAP), an intermediate involved in the bacterial biosynthesis of lysine and meso-diaminopimelic acid, an essential component of bacterial cell walls. In Psychromonas ingrahamii (strain DSM 17664 / CCUG 51855 / 37), this protein is Succinyl-diaminopimelate desuccinylase.